The primary structure comprises 382 residues: Two-component response regulator ARR14 (382 aa).

A Response regulatory domain is found at arginine 12–valine 128. At aspartate 63 the chain carries 4-aspartylphosphate. Residues cysteine 171 to serine 181 show a composition bias toward basic residues. Residues cysteine 171–leucine 193 are disordered. A Nuclear localization signal motif is present at residues lysine 199–arginine 202. A DNA-binding region (myb-like GARP) is located at residues arginine 202 to arginine 252.

It belongs to the ARR family. Type-B subfamily. In terms of assembly, binds the target DNA as a monomer. Two-component system major event consists of a His-to-Asp phosphorelay between a sensor histidine kinase (HK) and a response regulator (RR). In plants, the His-to-Asp phosphorelay involves an additional intermediate named Histidine-containing phosphotransfer protein (HPt). This multistep phosphorelay consists of a His-Asp-His-Asp sequential transfer of a phosphate group between first a His and an Asp of the HK protein, followed by the transfer to a conserved His of the HPt protein and finally the transfer to an Asp in the receiver domain of the RR protein. As to expression, predominantly expressed in young leaf tissue.

The protein resides in the nucleus. Transcriptional activator that binds specifically to the DNA sequence 5'-[AG]GATT-3'. Functions as a response regulator involved in His-to-Asp phosphorelay signal transduction system. Phosphorylation of the Asp residue in the receiver domain activates the ability of the protein to promote the transcription of target genes. Could directly activate some type-A response regulators in response to cytokinins. The protein is Two-component response regulator ARR14 (ARR14) of Arabidopsis thaliana (Mouse-ear cress).